The sequence spans 104 residues: MAKKTKSKVNTINAKLQLVMKSGKYVLGTQQALTTLRQGRSKLVVIANNCPPIRRAEVEYYCTLSKTPIHHYSGNNLDLGTACGKPFRTCVLSVTNVGDSDIAT.

The protein belongs to the eukaryotic ribosomal protein eL30 family.

The polypeptide is Large ribosomal subunit protein eL30 (RPL30) (Leishmania major).